The sequence spans 170 residues: Adenine phosphoribosyltransferase (170 aa).

This sequence belongs to the purine/pyrimidine phosphoribosyltransferase family. In terms of assembly, homodimer.

The protein localises to the cytoplasm. It catalyses the reaction AMP + diphosphate = 5-phospho-alpha-D-ribose 1-diphosphate + adenine. The protein operates within purine metabolism; AMP biosynthesis via salvage pathway; AMP from adenine: step 1/1. Functionally, catalyzes a salvage reaction resulting in the formation of AMP, that is energically less costly than de novo synthesis. The sequence is that of Adenine phosphoribosyltransferase from Prochlorococcus marinus (strain MIT 9312).